Consider the following 501-residue polypeptide: Glycogenin-2 (501 aa).

UDP-binding residues include Leu-42, Thr-44, Asn-45, Tyr-48, and Arg-110. 14 residues coordinate UDP-alpha-D-glucose: Leu-42, Thr-44, Asn-45, Tyr-48, Arg-110, Lys-119, Asp-135, Ala-136, Asp-137, Asn-166, Ser-167, Asp-193, Asp-196, and Gln-197. Residues Asp-135, Ala-136, and Asp-137 each coordinate UDP. Residue Asp-135 participates in Mn(2+) binding. Asp-137 is a Mn(2+) binding site. O-linked (Glc...) tyrosine glycosylation is present at Tyr-228. 3 residues coordinate UDP: His-245, Gly-248, and Lys-251. Mn(2+) is bound at residue His-245. UDP-alpha-D-glucose is bound by residues Gly-248 and Lys-251. 3 positions are modified to phosphoserine: Ser-368, Ser-399, and Ser-459.

Homodimer, tightly complexed to glycogen synthase. It depends on Mn(2+) as a cofactor. Self-glycosylated by the transfer of glucose residues from UDP-glucose to itself, forming an alpha-1,4-glycan of around 10 residues attached to Tyr-228. Detected in liver (at protein level). Expressed preferentially in liver, heart, and pancreas.

The protein resides in the cytoplasm. The protein localises to the nucleus. It catalyses the reaction L-tyrosyl-[glycogenin] + UDP-alpha-D-glucose = alpha-D-glucosyl-L-tyrosyl-[glycogenin] + UDP + H(+). The enzyme catalyses [1,4-alpha-D-glucosyl](n)-L-tyrosyl-[glycogenin] + UDP-alpha-D-glucose = [1,4-alpha-D-glucosyl](n+1)-L-tyrosyl-[glycogenin] + UDP + H(+). It participates in glycan biosynthesis; glycogen biosynthesis. Its function is as follows. Glycogenin participates in the glycogen biosynthetic process along with glycogen synthase and glycogen branching enzyme. It catalyzes the formation of a short alpha (1,4)-glucosyl chain covalently attached via a glucose 1-O-tyrosyl linkage to internal tyrosine residues and these chains act as primers for the elongation reaction catalyzed by glycogen synthase. The chain is Glycogenin-2 (GYG2) from Homo sapiens (Human).